Consider the following 277-residue polypeptide: Bifunctional protein FolD (277 aa).

NADP(+) contacts are provided by residues 160–162 (GAS), serine 185, and isoleucine 226.

Belongs to the tetrahydrofolate dehydrogenase/cyclohydrolase family. As to quaternary structure, homodimer.

It catalyses the reaction (6R)-5,10-methylene-5,6,7,8-tetrahydrofolate + NADP(+) = (6R)-5,10-methenyltetrahydrofolate + NADPH. The catalysed reaction is (6R)-5,10-methenyltetrahydrofolate + H2O = (6R)-10-formyltetrahydrofolate + H(+). It functions in the pathway one-carbon metabolism; tetrahydrofolate interconversion. Catalyzes the oxidation of 5,10-methylenetetrahydrofolate to 5,10-methenyltetrahydrofolate and then the hydrolysis of 5,10-methenyltetrahydrofolate to 10-formyltetrahydrofolate. The chain is Bifunctional protein FolD from Ruthia magnifica subsp. Calyptogena magnifica.